The sequence spans 607 residues: Autophagy-related protein 16-1 (607 aa).

The interval 13 to 43 is interaction with ATG5; the sequence is WKRHISEQLRRRDRLQRQAFEEIILQYNKLL. A coiled-coil region spans residues 79–230; it reads DSQLQEMAQL…QKELAEAAKE (152 aa). Ser139 carries the phosphoserine modification. A WIPI2-binding region spans residues 207 to 230; the sequence is AENEKDSRRRQARLQKELAEAAKE. The segment at 230–242 is RB1CC1-binding; sequence EPLPVEQDDDIEV. Ser269 and Ser287 each carry phosphoserine. A Caspase cleavage motif is present at residues 296-299; that stretch reads DNVD. WD repeat units follow at residues 320–359, 364–403, 406–445, 447–484, 486–525, 532–573, and 575–607; these read AHDG…CEFK, GSNA…LRHT, GHSG…CIKT, FAGS…IVRE, ELLG…IKQT, KCGS…KVLS, and QHSS…WAQY.

The protein belongs to the WD repeat ATG16 family. As to quaternary structure, homodimer. Homooligomer. Heterooligomer with ATG16L2. Interacts with WIPI1. Interacts with WIPI2. Interacts with RB1CC1; the interaction is required for ULK1 complex-dependent autophagy. Interacts with ATG5. Part of the minor complex composed of 4 sets of ATG12-ATG5 and ATG16L1 (400 kDa); this complex interacts with ATG3 leading to disruption of ATG7 interaction and promotion of ATG8-like proteins lipidation. Part of the major complex composed of 8 sets of ATG12-ATG5 and ATG16L1 (800 kDa). Interacts with RAB33B (GTP- and GDP-bound forms); the complex consists of a tetramer where two RAB33B molecules bind independently one molecule of the ATG16L1 homodimer; the interaction promotes ATG12-ATG5-ATG16L1 complex recruitment to phagophores. Interacts (via WD repeats) with TMEM59; the interaction mediates unconventional autophagic activity of TMEM59. Interacts with TLR2. Interacts (via WD repeats) with MEFV. Interacts with PPP1CA; the interaction dephosphorylates ATG16L1 causing dissociation of ATG12-ATG5-ATG16L1 complex. Interacts (via N-terminal) with CLTC. Interacts with NOD1. Interacts with NOD2. Interacts with TUFM. Interacts with TRIM16. Interacts (via WD repeats) with SPATA33. Interacts with IRGM. In terms of processing, proteolytic cleavage by activated CASP3 leads to degradation and may regulate autophagy upon cellular stress and apoptotic stimuli. Phosphorylation at Ser-139 promotes association with the ATG12-ATG5 conjugate to form the ATG12-ATG5-ATG16L1 complex.

It localises to the cytoplasm. It is found in the preautophagosomal structure membrane. The protein resides in the endosome membrane. Its subcellular location is the lysosome membrane. Functionally, plays an essential role in both canonical and non-canonical autophagy: interacts with ATG12-ATG5 to mediate the lipidation to ATG8 family proteins (MAP1LC3A, MAP1LC3B, MAP1LC3C, GABARAPL1, GABARAPL2 and GABARAP). Acts as a molecular hub, coordinating autophagy pathways via distinct domains that support either canonical or non-canonical signaling. During canonical autophagy, interacts with ATG12-ATG5 to mediate the conjugation of phosphatidylethanolamine (PE) to ATG8 proteins, to produce a membrane-bound activated form of ATG8. Thereby, controls the elongation of the nascent autophagosomal membrane. As part of the ATG8 conjugation system with ATG5 and ATG12, required for recruitment of LRRK2 to stressed lysosomes and induction of LRRK2 kinase activity in response to lysosomal stress. Also involved in non-canonical autophagy, a parallel pathway involving conjugation of ATG8 proteins to single membranes at endolysosomal compartments, probably by catalyzing conjugation of phosphatidylserine (PS) to ATG8. Non-canonical autophagy plays a key role in epithelial cells to limit lethal infection by influenza A (IAV) virus. Regulates mitochondrial antiviral signaling (MAVS)-dependent type I interferon (IFN-I) production. Negatively regulates NOD1- and NOD2-driven inflammatory cytokine response. Instead, promotes an autophagy-dependent antibacterial pathway together with NOD1 or NOD2. Plays a role in regulating morphology and function of Paneth cell. The protein is Autophagy-related protein 16-1 of Pongo abelii (Sumatran orangutan).